A 386-amino-acid polypeptide reads, in one-letter code: Chaperone protein DnaJ (386 aa).

The J domain occupies 5 to 69; sequence DLYDVLGVKK…QKRAQYDQFG (65 aa). Residues 140 to 224 form a CR-type zinc finger; it reads GKETSIKYNR…CHGAGVTEER (85 aa). The Zn(2+) site is built by cysteine 153, cysteine 156, cysteine 170, cysteine 173, cysteine 196, cysteine 199, cysteine 212, and cysteine 215. CXXCXGXG motif repeat units follow at residues 153–160, 170–177, 196–203, and 212–219; these read CHTCHGSG, CSTCHGQG, CPTCGGKG, and CDTCHGAG.

This sequence belongs to the DnaJ family. Homodimer. It depends on Zn(2+) as a cofactor.

It is found in the cytoplasm. Its function is as follows. Participates actively in the response to hyperosmotic and heat shock by preventing the aggregation of stress-denatured proteins and by disaggregating proteins, also in an autonomous, DnaK-independent fashion. Unfolded proteins bind initially to DnaJ; upon interaction with the DnaJ-bound protein, DnaK hydrolyzes its bound ATP, resulting in the formation of a stable complex. GrpE releases ADP from DnaK; ATP binding to DnaK triggers the release of the substrate protein, thus completing the reaction cycle. Several rounds of ATP-dependent interactions between DnaJ, DnaK and GrpE are required for fully efficient folding. Also involved, together with DnaK and GrpE, in the DNA replication of plasmids through activation of initiation proteins. In Limosilactobacillus fermentum (strain NBRC 3956 / LMG 18251) (Lactobacillus fermentum), this protein is Chaperone protein DnaJ.